The following is a 254-amino-acid chain: Probable septum site-determining protein MinC (254 aa).

This sequence belongs to the MinC family. As to quaternary structure, interacts with MinD and FtsZ.

Functionally, cell division inhibitor that blocks the formation of polar Z ring septums. Rapidly oscillates between the poles of the cell to destabilize FtsZ filaments that have formed before they mature into polar Z rings. Prevents FtsZ polymerization. This is Probable septum site-determining protein MinC from Burkholderia ambifaria (strain ATCC BAA-244 / DSM 16087 / CCUG 44356 / LMG 19182 / AMMD) (Burkholderia cepacia (strain AMMD)).